The sequence spans 297 residues: Flavin-dependent thymidylate synthase (297 aa).

Residues 41–251 form the ThyX domain; the sequence is GFVRLVDYMG…PLTYAAFVEY (211 aa). Residues Thr87, 110-112, and Glu118 contribute to the FAD site; that span reads RHR. Residues 107-110, 118-122, and Arg190 contribute to the dUMP site; these read QWVR and EYSAR. The ThyX motif motif lies at 110-120; that stretch reads RHRTANVNEYS. FAD contacts are provided by residues 206-208 and His212; that span reads DLH. Arg217 lines the dUMP pocket. Arg217 serves as the catalytic Involved in ionization of N3 of dUMP, leading to its activation.

The protein belongs to the thymidylate synthase ThyX family. As to quaternary structure, homotetramer. FAD serves as cofactor.

The enzyme catalyses dUMP + (6R)-5,10-methylene-5,6,7,8-tetrahydrofolate + NADPH + H(+) = dTMP + (6S)-5,6,7,8-tetrahydrofolate + NADP(+). Its pathway is pyrimidine metabolism; dTTP biosynthesis. Its function is as follows. Catalyzes the reductive methylation of 2'-deoxyuridine-5'-monophosphate (dUMP) to 2'-deoxythymidine-5'-monophosphate (dTMP) while utilizing 5,10-methylenetetrahydrofolate (mTHF) as the methyl donor, and NADPH and FADH(2) as the reductant. The chain is Flavin-dependent thymidylate synthase from Ehrlichia ruminantium (strain Gardel).